We begin with the raw amino-acid sequence, 466 residues long: Chromosomal replication initiator protein DnaA (466 aa).

Positions 1-86 (MSLSLWQQCL…EVGTKPVTQT (86 aa)) are domain I, interacts with DnaA modulators. Positions 86–129 (TLKTPVHNVVAPTQTTTAQPQRVAPAARSGWDNVPAPAEPTYRS) are domain II. The domain III, AAA+ region stretch occupies residues 130-346 (NVNVKHTFDN…GALNRVIANA (217 aa)). ATP-binding residues include glycine 174, glycine 176, lysine 177, and threonine 178. The tract at residues 347 to 466 (NFTGRAITID…FSNLIRTLSS (120 aa)) is domain IV, binds dsDNA.

This sequence belongs to the DnaA family. Oligomerizes as a right-handed, spiral filament on DNA at oriC.

It localises to the cytoplasm. Its function is as follows. Plays an essential role in the initiation and regulation of chromosomal replication. ATP-DnaA binds to the origin of replication (oriC) to initiate formation of the DNA replication initiation complex once per cell cycle. Binds the DnaA box (a 9 base pair repeat at the origin) and separates the double-stranded (ds)DNA. Forms a right-handed helical filament on oriC DNA; dsDNA binds to the exterior of the filament while single-stranded (ss)DNA is stabiized in the filament's interior. The ATP-DnaA-oriC complex binds and stabilizes one strand of the AT-rich DNA unwinding element (DUE), permitting loading of DNA polymerase. After initiation quickly degrades to an ADP-DnaA complex that is not apt for DNA replication. Binds acidic phospholipids. This chain is Chromosomal replication initiator protein DnaA, found in Salmonella gallinarum (strain 287/91 / NCTC 13346).